We begin with the raw amino-acid sequence, 318 residues long: MTEAGAVVLTAVLLDLLFGDPRWLPHPVVAIGKLITVLEKFLRRLVTNERVGGVLLLLLAVGITAGAAWGAVRGASLVHPLAGVVVSALLGWTCLAARSLHGESKRVADALVRGDLPEARRYLSFIVGRDTAGLSEPEVWRGAVETVAENTSDGVIAPLLFFMIGGAPLALAYKAVNTLDSMVGYKNERYLHFGWASARSDDLANLIPARLTGLLMTLAAPLAGLSGRGAWRIMLRDGRNHSSPNSGIPEAAAAGALGVQLGGTNVYFGKPVAKPTIGDPLKPLDATAWRGTVRLMYGAECLLVLLAAVMTTILTITD.

The next 5 helical transmembrane spans lie at 51-71, 77-97, 153-173, 206-226, and 296-316; these read VGGV…AWGA, LVHP…CLAA, DGVI…ALAY, LIPA…AGLS, and MYGA…ILTI.

This sequence belongs to the CobD/CbiB family.

The protein resides in the cell membrane. Its pathway is cofactor biosynthesis; adenosylcobalamin biosynthesis. In terms of biological role, converts cobyric acid to cobinamide by the addition of aminopropanol on the F carboxylic group. The protein is Cobalamin biosynthesis protein CobD of Geobacter metallireducens (strain ATCC 53774 / DSM 7210 / GS-15).